We begin with the raw amino-acid sequence, 155 residues long: Ribosome-binding factor A (155 aa).

Belongs to the RbfA family. As to quaternary structure, monomer. Binds 30S ribosomal subunits, but not 50S ribosomal subunits or 70S ribosomes.

The protein resides in the cytoplasm. Its function is as follows. One of several proteins that assist in the late maturation steps of the functional core of the 30S ribosomal subunit. Associates with free 30S ribosomal subunits (but not with 30S subunits that are part of 70S ribosomes or polysomes). Required for efficient processing of 16S rRNA. May interact with the 5'-terminal helix region of 16S rRNA. The sequence is that of Ribosome-binding factor A from Methylocella silvestris (strain DSM 15510 / CIP 108128 / LMG 27833 / NCIMB 13906 / BL2).